Here is a 210-residue protein sequence, read N- to C-terminus: Large ribosomal subunit protein uL3 (210 aa).

Residues Asn131 to Ser140 show a composition bias toward polar residues. Residues Asn131–Arg150 form a disordered region. Gln151 bears the N5-methylglutamine mark.

This sequence belongs to the universal ribosomal protein uL3 family. Part of the 50S ribosomal subunit. Forms a cluster with proteins L14 and L19. Methylated by PrmB.

Functionally, one of the primary rRNA binding proteins, it binds directly near the 3'-end of the 23S rRNA, where it nucleates assembly of the 50S subunit. The chain is Large ribosomal subunit protein uL3 from Acidithiobacillus ferrooxidans (strain ATCC 23270 / DSM 14882 / CIP 104768 / NCIMB 8455) (Ferrobacillus ferrooxidans (strain ATCC 23270)).